A 707-amino-acid polypeptide reads, in one-letter code: SEC14-like protein 5 (707 aa).

The PRELI/MSF1 domain maps to 3–175; that stretch reads QKYQSPVRVY…YLNELISQGI (173 aa). Residues 201–211 are compositionally biased toward polar residues; it reads RSNQAEQTASQ. Positions 201 to 232 are disordered; it reads RSNQAEQTASQGPCKADAGSHSLAAEPSTPDT. A CRAL-TRIO domain is found at 315-491; sequence PPRVLEEYYA…FLGGECVCNI (177 aa). In terms of domain architecture, GOLD spans 518-667; the sequence is TETIYQSSCV…KCKLMYYFEV (150 aa). Positions 686–695 are enriched in polar residues; sequence FSQLSGVTNT. The segment at 686–707 is disordered; sequence FSQLSGVTNTSSKSHSSSLISR. Residues 696-707 show a composition bias toward low complexity; it reads SSKSHSSSLISR.

The chain is SEC14-like protein 5 (sec14l1) from Xenopus tropicalis (Western clawed frog).